A 178-amino-acid chain; its full sequence is Ribosome maturation factor RimP (178 aa).

It belongs to the RimP family.

The protein resides in the cytoplasm. Its function is as follows. Required for maturation of 30S ribosomal subunits. The sequence is that of Ribosome maturation factor RimP from Maricaulis maris (strain MCS10) (Caulobacter maris).